We begin with the raw amino-acid sequence, 338 residues long: H(2)-forming methylenetetrahydromethanopterin dehydrogenase-related protein MJ0715 (338 aa).

It belongs to the HMD family.

The polypeptide is H(2)-forming methylenetetrahydromethanopterin dehydrogenase-related protein MJ0715 (Methanocaldococcus jannaschii (strain ATCC 43067 / DSM 2661 / JAL-1 / JCM 10045 / NBRC 100440) (Methanococcus jannaschii)).